A 379-amino-acid polypeptide reads, in one-letter code: MTNIRKSHPIAKIMNESFIDLPAPSNISAWWNFGSLLGICLILQILTGLFLAMHYSSDTMTAFSSVTHICRDVNHGWMIRYMHANGASLFFICLFMHVGRGVYYGSYTFSETWNIGILLLLTVMATAFMGYVLPWGQMSFWGATVITNLLSAIPYIGTNLVEWIWGGFSVDKATLTRFFAFHFILPFIISALAAVHLLFLHETGSNNPSGMMSDSDKIPFHPYYTIKDILGLLFLILALMLLVLFSPDLLGDPDNYTPANPLNTPPHIKPEWYFLFAYAILRSIPNKLGGVLPHAMSILILPIIPMLHTSKQRSIMFRPLSQCMFWLLVADLPILTWIGGQPVEYPFITIGQLASVYISSILLXLMPIFGIIENHSVKW.

4 helical membrane passes run 33-53, 77-98, 113-133, and 178-198; these read FGSL…FLAM, WMIR…FMHV, WNIG…GYVL, and FFAF…VHLL. Residues histidine 83 and histidine 97 each contribute to the heme b site. Heme b is bound by residues histidine 182 and histidine 196. Position 201 (histidine 201) interacts with a ubiquinone. The next 4 helical transmembrane spans lie at 226–246, 288–308, 320–340, and 347–367; these read IKDI…VLFS, LGGV…PMLH, LSQC…WIGG, and FITI…XLMP.

This sequence belongs to the cytochrome b family. As to quaternary structure, the cytochrome bc1 complex contains 11 subunits: 3 respiratory subunits (MT-CYB, CYC1 and UQCRFS1), 2 core proteins (UQCRC1 and UQCRC2) and 6 low-molecular weight proteins (UQCRH/QCR6, UQCRB/QCR7, UQCRQ/QCR8, UQCR10/QCR9, UQCR11/QCR10 and a cleavage product of UQCRFS1). This cytochrome bc1 complex then forms a dimer. Heme b is required as a cofactor.

It is found in the mitochondrion inner membrane. Its function is as follows. Component of the ubiquinol-cytochrome c reductase complex (complex III or cytochrome b-c1 complex) that is part of the mitochondrial respiratory chain. The b-c1 complex mediates electron transfer from ubiquinol to cytochrome c. Contributes to the generation of a proton gradient across the mitochondrial membrane that is then used for ATP synthesis. This is Cytochrome b (MT-CYB) from Chrotogale owstoni (Owston's palm civet).